A 351-amino-acid chain; its full sequence is uncharacterized protein (351 aa).

Positions 215, 226, 290, 319, and 333 each coordinate Mn(2+).

Belongs to the peptidase M24B family. The cofactor is Mn(2+).

This is an uncharacterized protein from Staphylococcus aureus (strain MSSA476).